Consider the following 626-residue polypeptide: Phosphomethylpyrimidine synthase (626 aa).

The disordered stretch occupies residues 1–22 (MTKQEKAINLSESAQVDQQSVQ). The span at 10–22 (LSESAQVDQQSVQ) shows a compositional bias: polar residues. Residues asparagine 232, methionine 261, tyrosine 290, histidine 326, 346–348 (SRG), 387–390 (DGLR), and glutamate 426 each bind substrate. Histidine 430 lines the Zn(2+) pocket. Tyrosine 453 is a substrate binding site. A Zn(2+)-binding site is contributed by histidine 494. [4Fe-4S] cluster contacts are provided by cysteine 574, cysteine 577, and cysteine 582.

This sequence belongs to the ThiC family. Homodimer. [4Fe-4S] cluster serves as cofactor.

It carries out the reaction 5-amino-1-(5-phospho-beta-D-ribosyl)imidazole + S-adenosyl-L-methionine = 4-amino-2-methyl-5-(phosphooxymethyl)pyrimidine + CO + 5'-deoxyadenosine + formate + L-methionine + 3 H(+). It functions in the pathway cofactor biosynthesis; thiamine diphosphate biosynthesis. Its function is as follows. Catalyzes the synthesis of the hydroxymethylpyrimidine phosphate (HMP-P) moiety of thiamine from aminoimidazole ribotide (AIR) in a radical S-adenosyl-L-methionine (SAM)-dependent reaction. In Pseudomonas putida (strain ATCC 47054 / DSM 6125 / CFBP 8728 / NCIMB 11950 / KT2440), this protein is Phosphomethylpyrimidine synthase.